A 440-amino-acid chain; its full sequence is MKRLARSLYLQVLLAVVLGALVGHLFPATGASLKPLGDGFIKLVKMLIAPIVFATVVTGIAKMGDLRKVGRVGLKGLLYFEVLTTVALAIGLVVARLARPGAGMNVDPATLDTKAIASYTNGAQAHGTVDFLMNVIPRDVADAFARGDILQVLLFSVLFGAALAALKDKGRPVLEFVDGLSLVLFRIVGFVMRLAPVGAFGAMAFTVGKYGIATLLSLGKLIACFYATSALFVVLMLGLVLRWCGLSLFRFLRYIKEEIFVVLGTSSSESALPLMMRKMEKLGCSKPVVGLVVPMGYSFNLDGTSIYLTLATLFIAQATNTHVTLVQELEILAVLLLTSKGAAAVTGGGFITLAATLSAVGNIPVAGLALLLGVDRFMSEARAITNLIGNGVASVAVSRWEGELDQARARAVLAGTVPEEVEPANEPEPPAIPAGAGLHG.

The next 8 membrane-spanning stretches (helical) occupy residues Leu-8–Ala-28, Phe-40–Ile-60, Leu-74–Val-94, Gly-147–Lys-167, Ile-187–Val-207, Leu-221–Leu-241, Val-288–Leu-308, and Ala-354–Val-374. A disordered region spans residues Glu-419–Gly-440.

This sequence belongs to the dicarboxylate/amino acid:cation symporter (DAACS) (TC 2.A.23) family.

It is found in the cell inner membrane. Functionally, responsible for the transport of dicarboxylates such as succinate, fumarate, and malate from the periplasm across the membrane. This chain is C4-dicarboxylate transport protein, found in Anaeromyxobacter sp. (strain K).